Here is a 162-residue protein sequence, read N- to C-terminus: Caveolin-2 (162 aa).

The Cytoplasmic segment spans residues 1–86 (MGLETEKADV…FEISKYVMYK (86 aa)). Tyrosine 19 bears the Phosphotyrosine; by SRC mark. Serine 20 and serine 23 each carry phosphoserine. Tyrosine 27 carries the post-translational modification Phosphotyrosine; by SRC. Residue serine 36 is modified to Phosphoserine. An intramembrane region (helical) is located at residues 87–107 (FLTVFLSIPLAFLAGILFATL). Residues 108 to 162 (SCLHIWIIMPFVKTCLMVLPSVQTIWKSVTDAIIAPLCTSIGRSFSSVSLQLSHD) are Cytoplasmic-facing.

It belongs to the caveolin family. As to quaternary structure, monomer or homodimer. Interacts with CAV1; the interaction forms a stable heterooligomeric complex that is required for targeting to lipid rafts and for caveolae formation. Tyrosine phosphorylated forms do not form heterooligomers with the Tyr-19-phosphorylated form existing as a monomer or dimer, and the Tyr-27-form as a monomer only. Interacts (tyrosine phosphorylated form) with the SH2 domain-containing proteins, RASA1, NCK1 and SRC. Interacts (tyrosine phosphorylated form) with INSR, the interaction (Tyr-27-phosphorylated form) is increased on insulin stimulation. Interacts (Tyr-19 phosphorylated form) with MAPK1 (phosphorylated form); the interaction, promoted by insulin, leads to nuclear location and MAPK1 activation. Interacts with STAT3; the interaction is increased on insulin-induced tyrosine phosphorylation leading to STAT activation. Post-translationally, phosphorylated on serine and tyrosine residues. CAV1 promotes phosphorylation on Ser-23 which then targets the complex to the plasma membrane, lipid rafts and caveolae. Phosphorylation on Ser-36 appears to modulate mitosis in endothelial cells. Phosphorylation on both Tyr-19 and Tyr-27 is required for insulin-induced 'Ser-727' phosphorylation of STAT3 and its activation. Phosphorylation on Tyr-19 is required for insulin-induced phosphorylation of MAPK1 and DNA binding of STAT3. Tyrosine phosphorylation is induced by both EGF and insulin (By. similarity).

It is found in the nucleus. It localises to the cytoplasm. The protein localises to the golgi apparatus membrane. The protein resides in the cell membrane. Its subcellular location is the membrane. It is found in the caveola. Functionally, may act as a scaffolding protein within caveolar membranes. Interacts directly with G-protein alpha subunits and can functionally regulate their activity. Acts as an accessory protein in conjunction with CAV1 in targeting to lipid rafts and driving caveolae formation. The Ser-36 phosphorylated form has a role in modulating mitosis in endothelial cells. Positive regulator of cellular mitogenesis of the MAPK signaling pathway. Required for the insulin-stimulated nuclear translocation and activation of MAPK1 and STAT3, and the subsequent regulation of cell cycle progression. The sequence is that of Caveolin-2 (CAV2) from Saimiri boliviensis boliviensis (Bolivian squirrel monkey).